The chain runs to 338 residues: Large ribosomal subunit protein uL3 (338 aa).

The disordered stretch occupies residues 1 to 37; that stretch reads MPQPSRPRKGSMGFSPRKRAESEVPRIRSWASNDGAP.

Belongs to the universal ribosomal protein uL3 family. In terms of assembly, part of the 50S ribosomal subunit. Forms a cluster with proteins L14 and L24e.

Functionally, one of the primary rRNA binding proteins, it binds directly near the 3'-end of the 23S rRNA, where it nucleates assembly of the 50S subunit. The protein is Large ribosomal subunit protein uL3 of Haloquadratum walsbyi (strain DSM 16790 / HBSQ001).